We begin with the raw amino-acid sequence, 181 residues long: uncharacterized protein (181 aa).

Positions 1–22 (MNKKSLLVVLVIALAVVPFAAT) are cleaved as a signal peptide.

This is an uncharacterized protein from Halorubrum pleomorphic virus 1 (HRPV-1).